We begin with the raw amino-acid sequence, 481 residues long: Delta 4,5-hexuronate-2-O-sulfatase (481 aa).

Ser-64 bears the 3-oxoalanine (Ser) mark. Zn(2+)-binding residues include Cys-225, Cys-226, His-462, and His-469. Positions 453–481 (VDADPRCRNHTPGYPSHEGPGAREILKRK) are disordered. The segment covering 472–481 (PGAREILKRK) has biased composition (basic and acidic residues).

This sequence belongs to the sulfatase family. Requires Zn(2+) as cofactor. The conversion to 3-oxoalanine (also known as C-formylglycine, FGly), of a serine or cysteine residue in prokaryotes and of a cysteine residue in eukaryotes, is critical for catalytic activity.

Exosulfatase involved in the degradation of the glycosaminoglycans (GAGs) chondroitin sulfate (CS), dermatan sulfate (DS) and heparan sulfate (HS). 2-O-sulfatase active on unsaturated non-reducing end hexuronate units. Has a slight preference for HS-derived structures. GAG-specific sulfatases play a key role in the persistence of the major human gut symbiont B.thetaiotaomicron in the host gastrointestinal tract. The polypeptide is Delta 4,5-hexuronate-2-O-sulfatase (Bacteroides thetaiotaomicron (strain ATCC 29148 / DSM 2079 / JCM 5827 / CCUG 10774 / NCTC 10582 / VPI-5482 / E50)).